A 310-amino-acid chain; its full sequence is NADH-cytochrome b5 reductase 1 (310 aa).

The helical transmembrane segment at 32 to 52 (EWLPYAVALAAILSGGKVFSN) threads the bilayer. Positions 61 to 166 (TEFQNFELKE…RGPKGAMVYT (106 aa)) constitute an FAD-binding FR-type domain. Residues 146–161 (AGLR…GPKG) and 172–209 (KIGM…QVDL) contribute to the FAD site.

The protein belongs to the flavoprotein pyridine nucleotide cytochrome reductase family. As to quaternary structure, monomer. Component of the 2-(3-amino-3-carboxypropyl)histidine synthase complex composed of DPH1, DPH2, DPH3 and a NADH-dependent reductase, predominantly CBR1. FAD is required as a cofactor.

Its subcellular location is the mitochondrion outer membrane. The catalysed reaction is 2 Fe(III)-[cytochrome b5] + NADH = 2 Fe(II)-[cytochrome b5] + NAD(+) + H(+). It carries out the reaction 2 Fe(3+)-[Dph3] + NADH = 2 Fe(2+)-[Dph3] + NAD(+) + H(+). It functions in the pathway protein modification; peptidyl-diphthamide biosynthesis. Its function is as follows. NADH-dependent reductase for DPH3 and cytochrome b5. Required for the first step of diphthamide biosynthesis, a post-translational modification of histidine which occurs in elongation factor 2. DPH1 and DPH2 transfer a 3-amino-3-carboxypropyl (ACP) group from S-adenosyl-L-methionine (SAM) to a histidine residue, the reaction is assisted by a reduction system comprising DPH3 and a NADH-dependent reductase, predominantly CBR1. By reducing DPH3, also involved in the formation of the tRNA wobble base modification mcm5s 2U (5-methoxycarbonylmethyl-2-thiouridine), mediated by the elongator complex. The cytochrome b5/NADH cytochrome b5 reductase electron transfer system supports the catalytic activity of several sterol biosynthetic enzymes. This Ajellomyces capsulatus (strain NAm1 / WU24) (Darling's disease fungus) protein is NADH-cytochrome b5 reductase 1 (CBR1).